The chain runs to 4349 residues: Dynein heavy chain, cytoplasmic (4349 aa).

Residues 1-1907 are stem; the sequence is MEVTSAAAPS…YIKMANAKLN (1907 aa). Coiled coils occupy residues 459–480, 1178–1215, 1266–1293, 1334–1354, 1560–1577, and 1640–1670; these read WEEN…RNEK, LMKF…STAQ, SQWE…QAKI, ESRI…KEAL, YKEF…LNRV, and NIPN…EKER. 4 AAA regions span residues 1908–2133, 2201–2459, 2565–2814, and 2908–3177; these read YGFE…VLVS, NAIR…FTTA, EVNT…WVRG, and TFCE…QGKV. 1946 to 1953 lines the ATP pocket; the sequence is GPAGTGKT. A coiled-coil region spans residues 2194 to 2217; that stretch reads ANLEALENAIRELAAERHLVVNEL. Residues 2239-2246, 2604-2611, and 2946-2953 each bind ATP; these read GNSGSGKS, GPPGSGKT, and GVSGSGKT. Coiled coils occupy residues 3186–3294, 3420–3477, and 3774–3807; these read LDFV…LAKA, GPLK…EMSR, and DNVI…VEEI. Residues 3186-3477 form a stalk region; it reads LDFVTQYIKL…TQAIKAEMSR (292 aa). AAA stretches follow at residues 3563 to 3792 and 4001 to 4213; these read LSTA…EISA and AERF…IVDT.

The protein belongs to the dynein heavy chain family. In terms of assembly, consists of at least two heavy chains and a number of intermediate and light chains.

It is found in the cytoplasm. Its subcellular location is the cytoskeleton. Functionally, cytoplasmic dynein acts as a motor for the intracellular retrograde motility of vesicles and organelles along microtubules. Dynein has ATPase activity; the force-producing power stroke is thought to occur on release of ADP. This Fusarium vanettenii (Neocosmospora pisi) protein is Dynein heavy chain, cytoplasmic (DHC1).